The following is a 1017-amino-acid chain: DNA polymerase (1017 aa).

It belongs to the DNA polymerase type-B family. Heterodimer with the terminal protein; this heterodimer binds to bp 9 to 18 of the genome. Forms a complex with viral pTP, DBP and hosts NFIA and POU2F1/OCT1 for initiation of replication.

It is found in the host nucleus. It catalyses the reaction DNA(n) + a 2'-deoxyribonucleoside 5'-triphosphate = DNA(n+1) + diphosphate. Eukaryotic-type DNA polymerase involved in viral genomic replication. DNA synthesis is protein primed, and acts in a strand displacement replication. Assembles in complex with viral pTP, DBP, host NFIA and host POU2F1/OCT1 on viral origin of replication. The polymerase covalently transfers dCMP onto pTP, thereby initiating complementary strand synthesis. The sequence is that of DNA polymerase from Bovine adenovirus 2 (BAdV-2).